The following is a 337-amino-acid chain: 2-oxoglutarate-Fe(II) type oxidoreductase (337 aa).

The Fe2OG dioxygenase domain occupies 179 to 282 (AIATLRYLHY…RYSIPFFFTG (104 aa)). Fe cation contacts are provided by His-205, Asp-207, and His-263. Residue Arg-273 coordinates 2-oxoglutarate.

This sequence belongs to the iron/ascorbate-dependent oxidoreductase family. Requires Fe(2+) as cofactor. In terms of tissue distribution, endocrocin is specifically produced in conidia.

The protein operates within secondary metabolite biosynthesis. Its function is as follows. 2-oxoglutarate-Fe(II) type oxidoreductase; part of the gene cluster that mediates the biosynthesis of endocrocin, a simple anthraquinone interesting for many biotechnological applications. The pathway begins with the synthesis of atrochrysone thioester by the polyketide synthase (PKS) encA. The atrochrysone carboxyl ACP thioesterase encB then breaks the thioester bond and releases the atrochrysone carboxylic acid from encA. The atrochrysone carboxylic acid is then converted to endocrocin anthrone which is further oxidized into endocrocin by encC. The exact function of encD has not been identified yet, but it negatively regulates endocrocin production, likely through the modification of endocrocin itself. The protein is 2-oxoglutarate-Fe(II) type oxidoreductase of Aspergillus fumigatus (strain ATCC MYA-4609 / CBS 101355 / FGSC A1100 / Af293) (Neosartorya fumigata).